Reading from the N-terminus, the 190-residue chain is dCTP deaminase (190 aa).

113–118 (KSTYAR) contacts dCTP. The active-site Proton donor/acceptor is Glu-139. DCTP-binding residues include Gln-158, Tyr-172, Lys-181, and Gln-182.

The protein belongs to the dCTP deaminase family. As to quaternary structure, homotrimer.

It carries out the reaction dCTP + H2O + H(+) = dUTP + NH4(+). Its pathway is pyrimidine metabolism; dUMP biosynthesis; dUMP from dCTP (dUTP route): step 1/2. In terms of biological role, catalyzes the deamination of dCTP to dUTP. This Chlamydia muridarum (strain MoPn / Nigg) protein is dCTP deaminase.